We begin with the raw amino-acid sequence, 175 residues long: Ribulose bisphosphate carboxylase small subunit, chloroplastic (175 aa).

The transit peptide at 1–46 directs the protein to the chloroplast; the sequence is MAPTVMASSATSVAPFQGLKSTAGLPVSRRSNGASLGSVSNGGRIR.

It belongs to the RuBisCO small chain family. As to quaternary structure, heterohexadecamer of 8 large and 8 small subunits.

It is found in the plastid. It localises to the chloroplast. Its function is as follows. RuBisCO catalyzes two reactions: the carboxylation of D-ribulose 1,5-bisphosphate, the primary event in carbon dioxide fixation, as well as the oxidative fragmentation of the pentose substrate. Both reactions occur simultaneously and in competition at the same active site. Although the small subunit is not catalytic it is essential for maximal activity. This is Ribulose bisphosphate carboxylase small subunit, chloroplastic from Aegilops tauschii (Tausch's goatgrass).